The sequence spans 291 residues: MVAVLGGRGVLRLRLLLSALKPGIHVPRAGPAAAFGTSVTSAKVAVNGVQLHYQQTGEGDHAVLLLPGMLGSGETDFGPQLKNLNKKLFTVVAWDPRGYGHSRPPDRDFPADFFERDAKDAVDLMKALKFKKVSLLGWSDGGITALIAAAKYPSYIHKMVIWGANAYVTDEDSMIYEGIRDVSKWSERTRKPLEALYGYDYFARTCEKWVDGIRQFKHLPDGNICRHLLPRVQCPALIVHGEKDPLVPRFHADFIHKHVKGSRLHLMPEGKHNLHLRFADEFNKLAEDFLQ.

An N-terminal signal peptide occupies residues 1-37 (MVAVLGGRGVLRLRLLLSALKPGIHVPRAGPAAAFGT). The region spanning 62-181 (AVLLLPGMLG…DSMIYEGIRD (120 aa)) is the AB hydrolase-1 domain. Residues K86 and K119 each carry the N6-acetyllysine modification. At K126 the chain carries N6-acetyllysine; alternate. K126 is subject to N6-succinyllysine; alternate. S139 acts as the Nucleophile in catalysis. K184 is subject to N6-succinyllysine. At K191 the chain carries N6-acetyllysine; alternate. K191 carries the N6-succinyllysine; alternate modification. K217 is modified (N6-acetyllysine). A Mg(2+)-binding site is contributed by D221. The residue at position 243 (K243) is an N6-acetyllysine. D244 serves as the catalytic Charge relay system. Residues K260 and K271 each carry the N6-acetyllysine; alternate modification. K260 and K271 each carry N6-succinyllysine; alternate. The active-site Charge relay system is H272.

This sequence belongs to the AB hydrolase superfamily. Lipase family. Monomer. May also form homodimers. In terms of tissue distribution, expressed at high levels in liver and kidney and lower levels in heart, intestine and skeletal muscle.

Its subcellular location is the mitochondrion. It catalyses the reaction L-homocysteine thiolactone + H2O = L-homocysteine + H(+). It carries out the reaction valacyclovir + H2O = acyclovir + L-valine + H(+). Specific alpha-amino acid ester serine hydrolase that prefers small, hydrophobic, and aromatic side chains and does not have a stringent requirement for the leaving group other than preferring a primary alcohol. Has homocysteine-thiolactonase activity (in vitro) and may play a significant role in the detoxification of homocysteine thiolactone in vivo. Catalyzes the hydrolytic activation of amino acid ester prodrugs of nucleoside analogs such as valacyclovir and valganciclovir, converting them into their active forms (acyclovir and ganciclovir). This is Serine hydrolase BPHL (BPHL) from Homo sapiens (Human).